The sequence spans 309 residues: Ornithine carbamoyltransferase (309 aa).

Carbamoyl phosphate-binding positions include 56-59 (STRT), glutamine 83, arginine 107, and 134-137 (HPCQ). L-ornithine is bound by residues asparagine 165, aspartate 223, and 227 to 228 (SM). Carbamoyl phosphate-binding positions include 263-264 (CL) and arginine 291.

Belongs to the aspartate/ornithine carbamoyltransferase superfamily. OTCase family.

It localises to the cytoplasm. It catalyses the reaction carbamoyl phosphate + L-ornithine = L-citrulline + phosphate + H(+). Its pathway is amino-acid biosynthesis; L-arginine biosynthesis; L-arginine from L-ornithine and carbamoyl phosphate: step 1/3. Reversibly catalyzes the transfer of the carbamoyl group from carbamoyl phosphate (CP) to the N(epsilon) atom of ornithine (ORN) to produce L-citrulline. The sequence is that of Ornithine carbamoyltransferase from Burkholderia lata (strain ATCC 17760 / DSM 23089 / LMG 22485 / NCIMB 9086 / R18194 / 383).